An 869-amino-acid polypeptide reads, in one-letter code: Protein translocase subunit SecA (869 aa).

Residues Gln88, 106-110, and Asp509 contribute to the ATP site; that span reads GEGKT. The segment covering 818–840 has biased composition (basic and acidic residues); it reads QDEGLKFNQREGEDAPAVREKKI. Residues 818 to 869 are disordered; sequence QDEGLKFNQREGEDAPAVREKKIPRNSPCPCGSGKKYKDCCGKSGPKKGILA. Zn(2+)-binding residues include Cys846, Cys848, Cys857, and Cys858.

It belongs to the SecA family. Monomer and homodimer. Part of the essential Sec protein translocation apparatus which comprises SecA, SecYEG and auxiliary proteins SecDF-YajC and YidC. The cofactor is Zn(2+).

It is found in the cell inner membrane. The protein resides in the cytoplasm. It carries out the reaction ATP + H2O + cellular proteinSide 1 = ADP + phosphate + cellular proteinSide 2.. Its function is as follows. Part of the Sec protein translocase complex. Interacts with the SecYEG preprotein conducting channel. Has a central role in coupling the hydrolysis of ATP to the transfer of proteins into and across the cell membrane, serving as an ATP-driven molecular motor driving the stepwise translocation of polypeptide chains across the membrane. This chain is Protein translocase subunit SecA, found in Campylobacter curvus (strain 525.92).